Here is a 218-residue protein sequence, read N- to C-terminus: Uracil-DNA glycosylase (218 aa).

Catalysis depends on Asp-68, which acts as the Proton acceptor.

This sequence belongs to the uracil-DNA glycosylase (UDG) superfamily. UNG family. In terms of assembly, homodimer. Interacts with protein OPG148. Component of the Uracil-DNA glycosylase(UDG)-OPG148-polymerase complex; OPG148 and UDG form a heterodimeric processivity factor that associates with OPG71 to form the processive polymerase holoenzyme.

It carries out the reaction Hydrolyzes single-stranded DNA or mismatched double-stranded DNA and polynucleotides, releasing free uracil.. In terms of biological role, plays an essential role in viral replication as a component of the DNA polymerase processivity factor. Excises uracil residues from the DNA which can arise as a result of misincorporation of dUMP residues by DNA polymerase or due to deamination of cytosine. This Variola virus protein is Uracil-DNA glycosylase (OPG116).